The chain runs to 502 residues: MRIGFDHEKYLEEQSKYILERVNNYDKLYLEFGGKLLFDLHAKRVLPGFDENAKIKLLHKLKEKVEIIICLYAGDIERNKIRGDFGITYDVDVLRLIDDLRGYDLEVNSVVITRYSGQPATNIFINKLERRGIKVYKHEATKGYPTDVDTIVSDEGYGKNPYIETTKPIVVVTAPGPGSGKLATCLSQLYHEYKRGNVAGYSKFETFPVWNVPLKHPLNIAYESATVDLKDVNMIDSFHFDAYNKVAVNYNRDIESFPVLKRIIEKITGEESVYKSPTDMGVNRVGFGIVDDEVVKEASKQEIIRRAFKTACEYKKGYVDKETFHRAKLIMEEMNLKEEDRKVVIPAREYAAKLKERANKSETCTVVALELEDGTILTGRSSELMDGTAAVILNAVKHYANISDEIHLISPVILEPIINLKAKTLGSKRTALSCEEVLIALSICAATNPTAQVAMGKLPMLKGCQAHSTTILSTNEEQTFRKLGIDVTCDPEYISESLYYNN.

The protein belongs to the UPF0371 family.

This chain is UPF0371 protein CLK_3516, found in Clostridium botulinum (strain Loch Maree / Type A3).